A 169-amino-acid chain; its full sequence is Cyclic pyranopterin monophosphate synthase (169 aa).

Substrate contacts are provided by residues 83–85 (LCH) and 121–122 (ME). Asp-136 is a catalytic residue.

The protein belongs to the MoaC family. As to quaternary structure, homohexamer; trimer of dimers.

It carries out the reaction (8S)-3',8-cyclo-7,8-dihydroguanosine 5'-triphosphate = cyclic pyranopterin phosphate + diphosphate. It participates in cofactor biosynthesis; molybdopterin biosynthesis. Functionally, catalyzes the conversion of (8S)-3',8-cyclo-7,8-dihydroguanosine 5'-triphosphate to cyclic pyranopterin monophosphate (cPMP). This Rhodospirillum centenum (strain ATCC 51521 / SW) protein is Cyclic pyranopterin monophosphate synthase.